The chain runs to 295 residues: SPX domain-containing protein 1 (295 aa).

Positions 1-166 (MKFGKSLSSQ…GALIRLPFIQ (166 aa)) constitute an SPX domain. A disordered region spans residues 199–227 (LSVSSEDGRGDSTNEDKPSNPSSSLVNGG). Over residues 204–216 (EDGRGDSTNEDKP) the composition is skewed to basic and acidic residues.

As to quaternary structure, interacts (via SPX domain) with PHR2 (via C-terminus). Interacts with RLI1 in the nucleus to prevents its positive regulation of leaf inclination during phosphate (Pi) starvation. Predominantly expressed in roots and leaves. Localized in leaves lamina joints.

Its subcellular location is the nucleus. Its function is as follows. Involved in plant adaptation to phosphate (Pi) starvation. Inhibits PHR2 DNA-binding activity via a Pi-dependent protein interaction. Suppresses the regulation on expression of PT2 by PHR2 and accumulation of shoot Pi. Optimizes growth under phosphate-limited conditions through a negative feedback loop of the PSI (phosphate starvation-induced) signaling pathway. Regulates the expression of SPX2, SPX3 and SPX5. May be an important link between signal transduction pathways related to phosphate starvation and cold stress. Together with SPX2, plays a negative role in the regulation of leaf inclination by preventing RLI1 transcription factor activity in Pi depleted conditions. This Oryza sativa subsp. japonica (Rice) protein is SPX domain-containing protein 1.